The chain runs to 166 residues: UPF0178 protein BPUM_2255 (166 aa).

The protein belongs to the UPF0178 family.

This Bacillus pumilus (strain SAFR-032) protein is UPF0178 protein BPUM_2255.